The chain runs to 806 residues: MGIVALILIKAAMSLILSSFPLFRSSRSSPASASLAGSGLPKTTPPKTASLQSHSPMFEETKGRIAKLFKKNEVCISTYDTAWVGMVPSPFSSDQPCFPDSLFWLLDNQCPDGSWAQPHHHSHSHSPSLLNKDVLSSTLASILALHKWGLGQHHIAKGLHFLELNFASATDNSQITPLGFDIVFPAMLDHAADLSLNLRLDPTTLNDLMNRRDLELQRCTENGSAETEVYMAYIGEGMGKLHDWESVMKYQRKNGSLFNSPSTTAAAFIALRNSDCLNYLYSALNKFGSAVPAVYPLDIYSQLCIVDNLERLGISRFFSTEIQSVLDETYRCWLQGDEEIIMDASTCGLAFRTLRMNGYKVTSDSFIKVVQDCFSSPGHMRDVNTTLELYRASELMLYPHEIELEKQNSRLRSLLEQELSGGSIQSSQLNAEVKQALDYPFYAALDRMVKKKTIEHYNIDDSRILKTSFRLPSFGNKDLLSLSVQDYNRCQAIHREELREFDRWFVENRLDELEFARHKSAYYYCYFAAAATFFAPELSDARMSWAKNALMTTMVDDLFDVTGSVEEMKNLIQLVELWDVDVSTECCSHKVQILFSALKRTICEVGDRAHQLQGRSIRSHIIVIWLDLLHSMMKEVEWTRDKFVPTMDEYVSNAHVSFALGPIVLPALYLVGPKLSEEMVNHSEYHNLFKLMSMCGRLMNDIRGYEREHDDGKLNAMSLYIMNNGGEITPEVAILEIKSWNDRHRRDLLRLVLEEKSVIPKACKDLFWHMCSVVHLFYNKDDGFWSQELIEVVNQVIHQPILLNHF.

A chloroplast-targeting transit peptide spans 1–75 (MGIVALILIK…AKLFKKNEVC (75 aa)). The segment at 33–56 (ASLAGSGLPKTTPPKTASLQSHSP) is disordered. Residues 45–55 (PPKTASLQSHS) are compositionally biased toward polar residues. Positions 556, 560, 700, and 708 each coordinate Mg(2+). Positions 556-560 (DDLFD) match the DDXXD motif motif.

It belongs to the terpene synthase family. It depends on Mg(2+) as a cofactor. In terms of tissue distribution, highly expressed in leaves, and, at low levels, in roots, stems and flowers.

The protein localises to the plastid. The protein resides in the chloroplast. It carries out the reaction ent-copalyl diphosphate = ent-atiserene + diphosphate. It functions in the pathway secondary metabolite biosynthesis; terpenoid biosynthesis. Functionally, involved in the biosynthesis of ent-kaurene diterpenoids natural products such as oridonin, miltiradiene, eriocalyxin B and nezukol, known to exhibit antitumor, anti-inflammatory and antibacterial activities. Catalyzes the conversion of ent-copalyl diphosphate (ent-CPP) to ent-atiserene. This chain is Ent-atiserene synthase KSL4, chloroplastic, found in Isodon rubescens (Rabdosia rubescens).